The chain runs to 998 residues: Collagen alpha-1(I) chain (998 aa).

Residues 1–998 are disordered; sequence GGVSVPGPMG…PGPPGPPGPP (998 aa). A 4-hydroxyproline mark is found at proline 18, proline 21, proline 24, proline 33, proline 48, proline 63, proline 69, proline 78, and proline 84. Residues 26–39 are compositionally biased toward low complexity; the sequence is PQGFQGPPGSSGPM. Residues 51-65 are compositionally biased toward basic and acidic residues; that stretch reads NGDDGEAGKPGRPGE. A 5-hydroxylysine; alternate modification is found at lysine 87. The O-linked (Gal...) hydroxylysine; alternate glycan is linked to lysine 87. Serine 93 is modified (phosphoserine). The span at 101-115 shows a compositional bias: low complexity; that stretch reads DAGPAGPKQMGPRGL. Residues proline 116, proline 122, proline 143, proline 152, proline 155, proline 182, proline 185, proline 197, proline 203, proline 212, proline 218, proline 221, and proline 236 each carry the 4-hydroxyproline modification. Low complexity predominate over residues 122–140; sequence PGASGPAGARGNDGATGAA. The segment covering 142–154 has biased composition (pro residues); the sequence is PPGPTGPAGPPGF. A compositionally biased stretch (low complexity) spans 188-238; sequence AGAAGPAGNPGADGQPGAKGANGAPGIAGAPGFPGARGPSGPQGPSGAPGP. Lysine 239 carries the 5-hydroxylysine modification. Residues proline 245, proline 248, proline 260, proline 269, proline 284, proline 290, proline 299, and proline 305 each carry the 4-hydroxyproline modification. The span at 294–303 shows a compositional bias: gly residues; it reads GERGGPGSRG. The residue at position 314 (lysine 314) is a 5-hydroxylysine. 4-hydroxyproline occurs at positions 323, 332, 338, 344, 353, 356, 365, 374, 380, 392, 401, 410, 413, 431, 449, 455, 461, 467, 473, 479, 491, 500, 511, 523, 526, 532, 538, and 547. The span at 347–401 shows a compositional bias: low complexity; that stretch reads KGLTGSPGSPGPDGKTGPPGPAGQDGRPGPAGPPGARGQAGVMGFPGPKGAAGEP. The segment covering 443 to 470 has biased composition (low complexity); it reads QGPAGSPGFQGLPGPAGPPGEAGKPGEQ. The span at 513–535 shows a compositional bias: low complexity; it reads NDGAKGDAGAPGAPGSQGAPGLQ. At lysine 559 the chain carries 5-hydroxylysine. 4-hydroxyproline is present on residues proline 565 and proline 580. Low complexity predominate over residues 592 to 606; the sequence is TGPSGPAGPTGARGA. A Phosphoserine modification is found at serine 595. 4-hydroxyproline occurs at positions 607, 613, 616, 625, 631, 649, 658, and 667. Over residues 619–646 the composition is skewed to low complexity; that stretch reads AGFAGPPGADGQPGAKGEPGDAGAKGDA. Over residues 648 to 660 the composition is skewed to pro residues; sequence PPGPAGPTGPPGP. Residue lysine 670 is modified to 5-hydroxylysine. Positions 675–691 are enriched in low complexity; the sequence is SAGPPGATGFPGAAGRV. Proline 679 and proline 685 each carry 4-hydroxyproline. Proline 693 carries the post-translational modification 3-hydroxyproline. 4-hydroxyproline occurs at positions 694, 703, 706, 727, 736, 744, 753, 771, 780, 783, 789, 804, 810, 816, 825, and 831. Residues 720–729 show a composition bias toward low complexity; it reads ETGPAGRPGE. Over residues 741–762 the composition is skewed to low complexity; sequence KGSPGADGPAGAPGTPGPQGIA. A compositionally biased stretch (pro residues) spans 803–813; that stretch reads PPGPMGPPGLA. Low complexity predominate over residues 815–830; it reads PPGEAGREGSPGAEGS. Lysine 840 bears the 5-hydroxylysine mark. Residues 848–863 show a composition bias toward pro residues; sequence PGPPGAPGAPGAPGPV. 4-hydroxyproline occurs at positions 851, 854, and 857. Residues 884-898 are compositionally biased toward low complexity; sequence AGPAGARGPAGPQGP. The segment covering 899 to 913 has biased composition (basic and acidic residues); the sequence is RGDKGETGEQGDRGI. Position 902 is a 5-hydroxylysine (lysine 902). Lysine 914 is subject to 5-hydroxylysine; alternate. O-linked (Gal...) hydroxylysine; alternate glycosylation is present at lysine 914. 4-hydroxyproline is present on residues proline 929, proline 932, proline 950, and proline 965. The span at 932–965 shows a compositional bias: low complexity; sequence PGEQGPSGASGPAGPRGPPGSAGTPGKDGLNGLP. Proline 970 is subject to 3-hydroxyproline. Proline 971 carries the 4-hydroxyproline modification. Residues 983–998 are compositionally biased toward pro residues; that stretch reads VGPPGPPGPPGPPGPP. Residue proline 985 is modified to 3-hydroxyproline. Proline 986 is subject to 4-hydroxyproline. A 3-hydroxyproline modification is found at proline 988. A 4-hydroxyproline modification is found at proline 989. 3-hydroxyproline is present on proline 991. Proline 992, proline 995, and proline 998 each carry 4-hydroxyproline.

Belongs to the fibrillar collagen family. Trimers of one alpha 2(I) and two alpha 1(I) chains. In terms of processing, contains mostly 4-hydroxyproline. Proline residues at the third position of the tripeptide repeating unit (G-X-Y) are hydroxylated in some or all of the chains. Contains 3-hydroxyproline at a few sites. This modification occurs on the first proline residue in the sequence motif Gly-Pro-Hyp, where Hyp is 4-hydroxyproline. Post-translationally, lysine residues at the third position of the tripeptide repeating unit (G-X-Y) are 5-hydroxylated in some or all of the chains. In terms of processing, O-glycosylated on hydroxylated lysine residues. The O-linked glycan consists of a Glc-Gal disaccharide. Expressed in bones.

The protein localises to the secreted. It is found in the extracellular space. Its subcellular location is the extracellular matrix. Its function is as follows. Type I collagen is a member of group I collagen (fibrillar forming collagen). The sequence is that of Collagen alpha-1(I) chain from Glyptodon sp. (strain SLP-2019) (Giant armadillo).